The chain runs to 459 residues: ATP synthase subunit beta (459 aa).

Gly149–Thr156 serves as a coordination point for ATP.

This sequence belongs to the ATPase alpha/beta chains family. F-type ATPases have 2 components, CF(1) - the catalytic core - and CF(0) - the membrane proton channel. CF(1) has five subunits: alpha(3), beta(3), gamma(1), delta(1), epsilon(1). CF(0) has three main subunits: a(1), b(2) and c(9-12). The alpha and beta chains form an alternating ring which encloses part of the gamma chain. CF(1) is attached to CF(0) by a central stalk formed by the gamma and epsilon chains, while a peripheral stalk is formed by the delta and b chains.

The protein resides in the cell inner membrane. The catalysed reaction is ATP + H2O + 4 H(+)(in) = ADP + phosphate + 5 H(+)(out). Produces ATP from ADP in the presence of a proton gradient across the membrane. The catalytic sites are hosted primarily by the beta subunits. This is ATP synthase subunit beta from Pseudomonas syringae pv. tomato (strain ATCC BAA-871 / DC3000).